The primary structure comprises 354 residues: UPF0324 membrane protein BL1094 (354 aa).

Transmembrane regions (helical) follow at residues 12-33, 43-65, 86-108, 112-129, 138-160, 175-197, 239-256, 271-293, 300-321, and 331-353; these read IATV…FASW, FGAL…SAYV, LLRL…TQGI, PIAA…YAIA, LAIL…LAGS, VTMA…IALG, LSRV…AIWW, VAFP…VPFV, LVDF…NVNF, and PMLA…AMLF.

It belongs to the UPF0324 family.

The protein resides in the cell membrane. This Bifidobacterium longum (strain NCC 2705) protein is UPF0324 membrane protein BL1094.